The following is a 369-amino-acid chain: Chaperone protein DnaJ (369 aa).

The J domain maps to 3-67 (DHYEVLGVER…QQRQQYDRGG (65 aa)). Residues 123–205 (GAHRDLEVDT…CQGQGRVRAR (83 aa)) form a CR-type zinc finger. Cys-136, Cys-139, Cys-153, Cys-156, Cys-179, Cys-182, Cys-193, and Cys-196 together coordinate Zn(2+). 4 CXXCXGXG motif repeats span residues 136–143 (CETCDGSC), 153–160 (CDICHGTG), 179–186 (CGSCRGYG), and 193–200 (CVTCQGQG).

It belongs to the DnaJ family. Homodimer. The cofactor is Zn(2+).

Its subcellular location is the cytoplasm. In terms of biological role, participates actively in the response to hyperosmotic and heat shock by preventing the aggregation of stress-denatured proteins and by disaggregating proteins, also in an autonomous, DnaK-independent fashion. Unfolded proteins bind initially to DnaJ; upon interaction with the DnaJ-bound protein, DnaK hydrolyzes its bound ATP, resulting in the formation of a stable complex. GrpE releases ADP from DnaK; ATP binding to DnaK triggers the release of the substrate protein, thus completing the reaction cycle. Several rounds of ATP-dependent interactions between DnaJ, DnaK and GrpE are required for fully efficient folding. Also involved, together with DnaK and GrpE, in the DNA replication of plasmids through activation of initiation proteins. The polypeptide is Chaperone protein DnaJ (Leifsonia xyli subsp. xyli (strain CTCB07)).